A 484-amino-acid polypeptide reads, in one-letter code: Hemogen (484 aa).

The segment covering 1 to 25 (MDLGKDQSHLKHHQTPDPHQEENHS) has biased composition (basic and acidic residues). 2 disordered regions span residues 1-32 (MDLG…IGTW) and 44-91 (KAEV…PQPQ). Residues 7–87 (QSHLKHHQTP…RQQNTELKVE (81 aa)) form a necessary for nuclear localization region. Residues 61-79 (KKRKQQRTGKGNRRGRKRQ) show a composition bias toward basic residues. Residues Ser123, Ser159, Ser181, Ser188, and Ser201 each carry the phosphoserine modification. Position 246 is a phosphothreonine (Thr246). 3 disordered regions span residues 265–290 (DVPK…TDQG), 306–369 (EPKD…YSPE), and 386–471 (QETS…ILNE). Positions 306–320 (EPKDLSTKTHQESAE) are enriched in basic and acidic residues. 2 positions are modified to phosphoserine: Ser349 and Ser353. Thr360 bears the Phosphothreonine mark. Phosphoserine is present on residues Ser363 and Ser367. 3 stretches are compositionally biased toward basic and acidic residues: residues 413-428 (YKNK…EPHQ), 438-447 (PKAHQEDAKD), and 454-463 (EMKEKPKEEP).

As to expression, expressed in hematopoietic precursor cells, thyroid and spermatids (at protein level). Expressed in bone marrow, testis, thymus. Expressed in prostate cancer and ovarian cancer. Also expressed in thymus and thyroid tumors, non-Hodgkin lymphoma, various leukemia cell lines, peripheral blood mononuclear cells (PBMCs) and bone marrow mononuclear cells (BMMCs) of patients with leukemia.

Its subcellular location is the nucleus. In terms of biological role, regulates the proliferation and differentiation of hematopoietic cells. Overexpression block the TPA-induced megakaryocytic differentiation in the K562 cell model. May also prevent cell apoptosis through the activation of the nuclear factor-kappa B (NF-kB). This Homo sapiens (Human) protein is Hemogen (HEMGN).